We begin with the raw amino-acid sequence, 155 residues long: Transcriptional repressor NrdR (155 aa).

A zinc finger lies at Cys3 to Cys34. The ATP-cone domain maps to Leu49–Asp139.

The protein belongs to the NrdR family. The cofactor is Zn(2+).

Negatively regulates transcription of bacterial ribonucleotide reductase nrd genes and operons by binding to NrdR-boxes. This is Transcriptional repressor NrdR from Cereibacter sphaeroides (strain ATCC 17029 / ATH 2.4.9) (Rhodobacter sphaeroides).